Here is a 237-residue protein sequence, read N- to C-terminus: Sugar fermentation stimulation protein homolog (237 aa).

Belongs to the SfsA family.

The sequence is that of Sugar fermentation stimulation protein homolog from Pseudomonas putida (strain ATCC 700007 / DSM 6899 / JCM 31910 / BCRC 17059 / LMG 24140 / F1).